A 498-amino-acid polypeptide reads, in one-letter code: ATP synthase subunit beta, chloroplastic (498 aa).

172 to 179 (GGAGVGKT) contributes to the ATP binding site.

It belongs to the ATPase alpha/beta chains family. In terms of assembly, F-type ATPases have 2 components, CF(1) - the catalytic core - and CF(0) - the membrane proton channel. CF(1) has five subunits: alpha(3), beta(3), gamma(1), delta(1), epsilon(1). CF(0) has four main subunits: a(1), b(1), b'(1) and c(9-12).

It is found in the plastid. It localises to the chloroplast thylakoid membrane. The enzyme catalyses ATP + H2O + 4 H(+)(in) = ADP + phosphate + 5 H(+)(out). Its function is as follows. Produces ATP from ADP in the presence of a proton gradient across the membrane. The catalytic sites are hosted primarily by the beta subunits. The polypeptide is ATP synthase subunit beta, chloroplastic (Canella winterana (Wild cinnamon)).